A 351-amino-acid polypeptide reads, in one-letter code: MSARLRPELADLPAYAPGKTVPGAIKIASNETVHGPLPSVRAAIEKAIDGINRYPDNGYVELRERLAKHVNFAPEYISVGCGSVSLCQQLIQITSTVGDEVLFGWRSFEIYPLQVRTAGATPVQVPLTDHTFDLDAMLAAITDRTRLIFVCNPNNPTSTVVDPDALARFVEAVPPHIMVVVDEAYVEYIRDGLAPDSFGLVRAHSNVVVLRTFSKAYGLAGLRIGYAVADPDIIAALSKVYVPFTATSVSQAAAIACLDAADELLERTDAVVAERTRVSAALREAGYDLPPSQANFVWLPLVGRAQQFAADAANSRVIVRPYGEDGVRVTIAAPHENDAFLGFARGWDGLR.

Lys-215 carries the post-translational modification N6-(pyridoxal phosphate)lysine.

The protein belongs to the class-II pyridoxal-phosphate-dependent aminotransferase family. In terms of assembly, homodimer. Pyridoxal 5'-phosphate is required as a cofactor.

The enzyme catalyses an aromatic L-alpha-amino acid + 2-oxoglutarate = an aromatic oxo-acid + L-glutamate. Aminotransferase that catalyzes the conversion of aromatic amino acids and 2-oxoglutarate into corresponding aromatic oxo acids and L-glutamate. This Mycolicibacterium vanbaalenii (strain DSM 7251 / JCM 13017 / BCRC 16820 / KCTC 9966 / NRRL B-24157 / PYR-1) (Mycobacterium vanbaalenii) protein is Aromatic amino acid aminotransferase.